The primary structure comprises 203 residues: Imidazoleglycerol-phosphate dehydratase (203 aa).

The protein belongs to the imidazoleglycerol-phosphate dehydratase family.

The protein localises to the cytoplasm. It catalyses the reaction D-erythro-1-(imidazol-4-yl)glycerol 3-phosphate = 3-(imidazol-4-yl)-2-oxopropyl phosphate + H2O. Its pathway is amino-acid biosynthesis; L-histidine biosynthesis; L-histidine from 5-phospho-alpha-D-ribose 1-diphosphate: step 6/9. The sequence is that of Imidazoleglycerol-phosphate dehydratase from Helicobacter hepaticus (strain ATCC 51449 / 3B1).